The primary structure comprises 454 residues: DNA-binding protein (454 aa).

The disordered stretch occupies residues Met1–His41. The residue at position 129 (Tyr129) is a Phosphotyrosine; by host. Residues Cys213 and His215 each contribute to the Zn(2+) site. Residues Val226–Phe260 are flexible loop. Cys268, Cys284, Cys325, Cys327, Cys378, and Cys394 together coordinate Zn(2+). The segment at Thr440–Phe454 is C-terminal arm, DBP binding.

This sequence belongs to the adenoviridae E2A DNA-binding protein family. As to quaternary structure, homomultimerizes on viral ssDNA bound to pTP. Forms a initiation complex with viral polymerase, pTP and hosts NFIA and POU2F1/OCT1. Interacts with host SRCAP.

It is found in the host nucleus. Its function is as follows. Plays a role in the elongation phase of viral strand displacement replication by unwinding the template in an ATP-independent fashion, employing its capacity to form multimers. Also enhances the rate of initiation. Released from template upon second strand synthesis. Assembles in complex with viral pTP, viral pol, host NFIA and host POU2F1/OCT1 on viral origin of replication. Covers the whole ssDNA genome during synthesis. The complementary strand synthesis induces its relese from DNA template. May inhibit cellular transcription mediated by the interaction between host SRCAP and CBP. The polypeptide is DNA-binding protein (Canine adenovirus serotype 1 (strain RI261) (CAdV-1)).